Consider the following 192-residue polypeptide: MKLLEERIKRDGEVLDGNVLKINSFLNHQVDPKLMMEVGKEFKRLFAGEQIDKVLTCEASGIAPGVMTAYQLGVPMVFARKKKPSTLNDAVYWADVFSYTKKVNSKICVEEKFLHEGENILIIDDFVAHGEAVKGMVNIAKQAHCNIVGVGAVVAKTFQGGSDWVKDEGLRFESLASIASFKDGQVHFEGEE.

L20 and N27 together coordinate xanthine. Residue 128 to 132 participates in 5-phospho-alpha-D-ribose 1-diphosphate binding; the sequence is AHGEA. Residue K156 coordinates xanthine.

It belongs to the purine/pyrimidine phosphoribosyltransferase family. Xpt subfamily. As to quaternary structure, homodimer.

It is found in the cytoplasm. The catalysed reaction is XMP + diphosphate = xanthine + 5-phospho-alpha-D-ribose 1-diphosphate. It functions in the pathway purine metabolism; XMP biosynthesis via salvage pathway; XMP from xanthine: step 1/1. Converts the preformed base xanthine, a product of nucleic acid breakdown, to xanthosine 5'-monophosphate (XMP), so it can be reused for RNA or DNA synthesis. This is Xanthine phosphoribosyltransferase from Lactobacillus acidophilus (strain ATCC 700396 / NCK56 / N2 / NCFM).